The primary structure comprises 32 residues: Cytochrome b6-f complex subunit 7 (32 aa).

Residues 9 to 27 (AALFWVLIPLGLAGGALLL) form a helical membrane-spanning segment.

The protein belongs to the PetM family. As to quaternary structure, the 4 large subunits of the cytochrome b6-f complex are cytochrome b6, subunit IV (17 kDa polypeptide, PetD), cytochrome f and the Rieske protein, while the 4 small subunits are PetG, PetL, PetM and PetN. The complex functions as a dimer.

The protein localises to the cellular thylakoid membrane. Functionally, component of the cytochrome b6-f complex, which mediates electron transfer between photosystem II (PSII) and photosystem I (PSI), cyclic electron flow around PSI, and state transitions. This chain is Cytochrome b6-f complex subunit 7, found in Synechococcus sp. (strain RCC307).